A 244-amino-acid chain; its full sequence is NAD(P)H-hydrate epimerase (244 aa).

The YjeF N-terminal domain occupies 35–240 (IREIDSLAME…SIGVPLELLR (206 aa)). 82 to 86 (NNGGD) provides a ligand contact to (6S)-NADPHX. Residues Asn83 and Asp150 each contribute to the K(+) site. (6S)-NADPHX contacts are provided by residues 154–160 (GTGAKPP), Tyr165, and Asp183. Residue Thr186 coordinates K(+).

Belongs to the NnrE/AIBP family. The cofactor is K(+).

The catalysed reaction is (6R)-NADHX = (6S)-NADHX. It carries out the reaction (6R)-NADPHX = (6S)-NADPHX. Its function is as follows. Catalyzes the epimerization of the S- and R-forms of NAD(P)HX, a damaged form of NAD(P)H that is a result of enzymatic or heat-dependent hydration. This is a prerequisite for the S-specific NAD(P)H-hydrate dehydratase to allow the repair of both epimers of NAD(P)HX. This chain is NAD(P)H-hydrate epimerase, found in Rhodopirellula baltica (strain DSM 10527 / NCIMB 13988 / SH1).